The primary structure comprises 362 residues: tRNA-specific 2-thiouridylase MnmA (362 aa).

Residues 6–13 and leucine 32 contribute to the ATP site; that span reads AMSGGVDS. Cysteine 101 (nucleophile) is an active-site residue. Cysteine 101 and cysteine 197 are disulfide-bonded. Position 125 (glycine 125) interacts with ATP. An interaction with tRNA region spans residues 147–149; it reads KDQ. The Cysteine persulfide intermediate role is filled by cysteine 197.

This sequence belongs to the MnmA/TRMU family.

It is found in the cytoplasm. The enzyme catalyses S-sulfanyl-L-cysteinyl-[protein] + uridine(34) in tRNA + AH2 + ATP = 2-thiouridine(34) in tRNA + L-cysteinyl-[protein] + A + AMP + diphosphate + H(+). Functionally, catalyzes the 2-thiolation of uridine at the wobble position (U34) of tRNA, leading to the formation of s(2)U34. This is tRNA-specific 2-thiouridylase MnmA from Acidothermus cellulolyticus (strain ATCC 43068 / DSM 8971 / 11B).